Consider the following 493-residue polypeptide: Cholesteryl ester transfer protein (493 aa).

The N-terminal stretch at 1-17 (MLAATVLTLALLGNVHA) is a signal peptide. N-linked (GlcNAc...) asparagine glycans are attached at residues Asn-59 and Asn-105. An intrachain disulfide couples Cys-160 to Cys-201. N-linked (GlcNAc...) asparagine glycans are attached at residues Asn-257, Asn-358, and Asn-413.

The protein belongs to the BPI/LBP/Plunc superfamily. BPI/LBP family. As to expression, probably primarily expressed in liver and adipose tissues. Detected in adrenal gland, mesenteric fat, spleen and aorta.

The protein localises to the secreted. It catalyses the reaction cholesteryl (9Z-octadecenoate)(in) = cholesteryl (9Z-octadecenoate)(out). The enzyme catalyses 1,2,3-tri-(9Z-octadecenoyl)-glycerol(in) = 1,2,3-tri-(9Z-octadecenoyl)-glycerol(out). It carries out the reaction cholesteryl (9Z,12Z)-octadecadienoate(in) = cholesteryl (9Z,12Z)-octadecadienoate(out). In terms of biological role, involved in the transfer of neutral lipids, including cholesteryl ester and triglyceride, among lipoprotein particles. Allows the net movement of cholesteryl ester from high density lipoproteins/HDL to triglyceride-rich very low density lipoproteins/VLDL, and the equimolar transport of triglyceride from VLDL to HDL. Regulates the reverse cholesterol transport, by which excess cholesterol is removed from peripheral tissues and returned to the liver for elimination. The chain is Cholesteryl ester transfer protein from Macaca fascicularis (Crab-eating macaque).